A 285-amino-acid polypeptide reads, in one-letter code: Probable endonuclease 4 (285 aa).

The Zn(2+) site is built by histidine 69, histidine 109, glutamate 145, aspartate 179, histidine 182, histidine 216, aspartate 229, histidine 231, and glutamate 261.

The protein belongs to the AP endonuclease 2 family. The cofactor is Zn(2+).

It carries out the reaction Endonucleolytic cleavage to 5'-phosphooligonucleotide end-products.. Endonuclease IV plays a role in DNA repair. It cleaves phosphodiester bonds at apurinic or apyrimidinic (AP) sites, generating a 3'-hydroxyl group and a 5'-terminal sugar phosphate. This chain is Probable endonuclease 4, found in Salmonella paratyphi A (strain AKU_12601).